Here is a 356-residue protein sequence, read N- to C-terminus: MTKENICIVFGGKSAEHEVSILTAQNVLNAIDKDKYHVDIIYITNDGDWRKQNNITAEIISTDELHLENGEALEISQLLKESSSGQPYDAVFPLLHGPNGEDGTIQGLFEVLDVPYVGNGVLSAASSMDKLVMKQLFEHRGLPQLPYISFLRSEYEKYEHNILKLVNDKLNYPVFVKPANLGSSVGISKCNNEAELKEGIKEAFQFDRKLVIEQGVNAREIEVAVLGNDYPEATWPGEVVKDVAFYDYKSKYKDGKVQLQIPADLDEDVQLTLRNMALEAFKATDCSGLVRADFFVTEDNQIYINETNAMPGFTAFSMYPKLWENMGLSYPELITKLIELAKERHQDKQKNKYKID.

The region spanning 134-339 (KQLFEHRGLP…YPELITKLIE (206 aa)) is the ATP-grasp domain. 167–222 (NDKLNYPVFVKPANLGSSVGISKCNNEAELKEGIKEAFQFDRKLVIEQGVNAREIE) lines the ATP pocket. Mg(2+)-binding residues include Asp-293, Glu-306, and Asn-308.

Belongs to the D-alanine--D-alanine ligase family. Requires Mg(2+) as cofactor. Mn(2+) is required as a cofactor.

The protein resides in the cytoplasm. The catalysed reaction is 2 D-alanine + ATP = D-alanyl-D-alanine + ADP + phosphate + H(+). The protein operates within cell wall biogenesis; peptidoglycan biosynthesis. Functionally, cell wall formation. The polypeptide is D-alanine--D-alanine ligase (Staphylococcus aureus (strain MSSA476)).